Consider the following 192-residue polypeptide: NADH-quinone oxidoreductase subunit B (192 aa).

Residues Cys71, Cys72, Cys136, and Cys166 each coordinate [4Fe-4S] cluster.

This sequence belongs to the complex I 20 kDa subunit family. NDH-1 is composed of 14 different subunits. Subunits NuoB, C, D, E, F, and G constitute the peripheral sector of the complex. It depends on [4Fe-4S] cluster as a cofactor.

It localises to the cell inner membrane. It carries out the reaction a quinone + NADH + 5 H(+)(in) = a quinol + NAD(+) + 4 H(+)(out). Its function is as follows. NDH-1 shuttles electrons from NADH, via FMN and iron-sulfur (Fe-S) centers, to quinones in the respiratory chain. The immediate electron acceptor for the enzyme in this species is believed to be ubiquinone. Couples the redox reaction to proton translocation (for every two electrons transferred, four hydrogen ions are translocated across the cytoplasmic membrane), and thus conserves the redox energy in a proton gradient. The protein is NADH-quinone oxidoreductase subunit B of Sinorhizobium medicae (strain WSM419) (Ensifer medicae).